A 245-amino-acid polypeptide reads, in one-letter code: MSFCYVRTISIALFLFIFLFLNNGNFKNNFYRKDNKYSSIKIRSFRSLAENQKVETEQSTPAKPEPTEFVNNDIHQNKNTFKKLKNNEKKKEILEEKMKDFVKLYVNKSSGECQRYRLQQHLKNYSSSNEYKKFMNKFVKFLKVHNDLNALKSQLHFNNVRAATIIFIAGFLSIFAILLTISAVAATSKFTNNMLAIAGVGALGSALSLPGMALLFVPAMLYVLNRKNEITNHYSERIIKQVSNF.

The first 25 residues, 1–25, serve as a signal peptide directing secretion; sequence MSFCYVRTISIALFLFIFLFLNNGN. Residues 26–164 are Cytoplasmic-facing; it reads FKNNFYRKDN…LHFNNVRAAT (139 aa). Residues 46–50 form a PEXEL motif region; sequence RSLAE. The segment at 52-71 is disordered; that stretch reads QKVETEQSTPAKPEPTEFVN. Residues 165-185 traverse the membrane as a helical segment; sequence IIFIAGFLSIFAILLTISAVA. Topologically, residues 186-196 are extracellular; it reads ATSKFTNNMLA. Residues 197–217 form a helical membrane-spanning segment; sequence IAGVGALGSALSLPGMALLFV. At 218–245 the chain is on the cytoplasmic side; that stretch reads PAMLYVLNRKNEITNHYSERIIKQVSNF.

As to quaternary structure, monomer. May form (via the first cytoplasmic domain) homodimers or homotrimers; disulfide-linked. Interacts with MAHRP1. May interact (via first cytoplasmic domain) with SBP1; the interaction is likely to occur at the ring stage in the Maurer's clefts and is weaken by ATP. Interacts (via extracellular domain) with human chemokine CX3CL1; the interaction mediates the adhesion of infected erythrocytes with endothelial cells.

It is found in the host cell membrane. In terms of biological role, during the asexual blood stage and probably at the ring/trophozoite stages, plays a role in Maurer's cleft formation and/or morphology. Also, involved in the loading of the virulence factor EMP1 into the Maurer's cleft membrane. By binding to host chemokine CX3CL1, mediates the cytoadherence of host erythrocytes infected with parasite mature forms (late trophozoite and schizont) to endothelial cells, which sequesters them away from the circulation and thus prevents their elimination by the host spleen. The protein is CX3CL1-binding protein 2 of Plasmodium falciparum (isolate 3D7).